The following is a 541-amino-acid chain: Berberine bridge enzyme-like 1 (541 aa).

A signal peptide spans 1-20 (MKLSCLVFLIVSSLVSSSLA). 7 N-linked (GlcNAc...) asparagine glycosylation sites follow: N25, N38, N73, N136, N302, N339, and N357. A disulfide bond links C35 and C98. An FAD-binding PCMH-type domain is found at 76–255 (TSPKPLLVIA…LSFKIKLVPV (180 aa)). The segment at residues 113 to 180 (HDYDGVSYIS…GTHGFPAGVC (68 aa)) is a cross-link (6-(S-cysteinyl)-8alpha-(pros-histidyl)-FAD (His-Cys)).

This sequence belongs to the oxygen-dependent FAD-linked oxidoreductase family. It depends on FAD as a cofactor. In terms of processing, the FAD cofactor is bound via a bicovalent 6-S-cysteinyl, 8alpha-N1-histidyl FAD linkage. As to expression, accumulates in cell walls of etiolated hypocotyls.

The protein resides in the secreted. It is found in the cell wall. The chain is Berberine bridge enzyme-like 1 from Arabidopsis thaliana (Mouse-ear cress).